The following is a 137-amino-acid chain: Large ribosomal subunit protein uL16 (137 aa).

Belongs to the universal ribosomal protein uL16 family. As to quaternary structure, part of the 50S ribosomal subunit.

In terms of biological role, binds 23S rRNA and is also seen to make contacts with the A and possibly P site tRNAs. The chain is Large ribosomal subunit protein uL16 from Solidesulfovibrio magneticus (strain ATCC 700980 / DSM 13731 / RS-1) (Desulfovibrio magneticus).